Consider the following 284-residue polypeptide: Agamous-like MADS-box protein AGL49 (284 aa).

The segment at Met1 to Arg20 is disordered. The 46-residue stretch at Lys21–Gln66 folds into the MADS-box domain.

Interacts with MEE14/CBP1.

The protein resides in the nucleus. Functionally, probable transcription factor that may function in the maintenance of the proper function of the central cell in pollen tube attraction. The chain is Agamous-like MADS-box protein AGL49 from Arabidopsis thaliana (Mouse-ear cress).